Here is a 570-residue protein sequence, read N- to C-terminus: Protein B602L (570 aa).

Tandem repeats lie at residues 161–164 (CADT), 165–168 (NAST), 169–172 (SADT), 173–176 (NAST), 177–180 (CADT), 181–184 (NVDT), 185–188 (CAST), 189–192 (CADT), 193–196 (NVDT), 197–200 (CADT), 201–204 (CAST), 205–208 (CAST), 209–212 (CAST), 213–216 (CAST), 217–220 (CADT), 221–224 (NVDT), 225–228 (CADT), 229–232 (CVST), 233–236 (CAST), and 237–240 (CANT). The interval 161–240 (CADTNASTSA…STCASTCANT (80 aa)) is 20 X 4 AA tandem repeats of [CNS]-[ATV]-[DNS]-T.

It belongs to the asfivirus B602L family.

It localises to the host cytoplasm. Its function is as follows. Plays an essential role in the assembly of the icosahedral capsid of the virus. Allows the assembly of 3 molecules of hexon protein p72 and formation of a thermostable trimer. The chain is Protein B602L from African swine fever virus (isolate Tick/South Africa/Pretoriuskop Pr4/1996) (ASFV).